Here is a 967-residue protein sequence, read N- to C-terminus: Aminopeptidase N (967 aa).

Topologically, residues 2–8 (AKGFYIS) are cytoplasmic. The chain crosses the membrane as a helical; Signal-anchor for type II membrane protein span at residues 9–32 (KSLGILGILLGVAAVCTIIALSVV). The interval 33–68 (YSQEKNKNANSSPVASTTPSASATTNPASATTLDQS) is cytosolic Ser/Thr-rich junction. The Extracellular segment spans residues 33–967 (YSQEKNKNAN…VLQWFTENSK (935 aa)). The tract at residues 40–62 (NANSSPVASTTPSASATTNPASA) is disordered. Residues 41 to 62 (ANSSPVASTTPSASATTNPASA) are compositionally biased toward low complexity. Positions 69–967 (KAWNRYRLPN…VLQWFTENSK (899 aa)) are metalloprotease. Asn-128 carries an N-linked (GlcNAc...) asparagine glycan. The residue at position 176 (Tyr-176) is a Sulfotyrosine. 2 N-linked (GlcNAc...) asparagine glycosylation sites follow: Asn-234 and Asn-265. The tract at residues 288–295 (DYVEKQAS) is necessary and sufficient to mediate interaction with HCoV-229E. A glycan (N-linked (GlcNAc...) asparagine) is linked at Asn-319. A substrate-binding site is contributed by 352–356 (GAMEN). His-388 is a Zn(2+) binding site. Glu-389 (proton acceptor) is an active-site residue. His-392 and Glu-411 together coordinate Zn(2+). Residues Tyr-419 and Tyr-424 each carry the sulfotyrosine modification. N-linked (GlcNAc...) asparagine glycosylation is found at Asn-527, Asn-573, Asn-625, Asn-681, and Asn-735. Disulfide bonds link Cys-761–Cys-768 and Cys-798–Cys-834. Asn-818 carries N-linked (GlcNAc...) asparagine glycosylation. Tyr-913 is modified (sulfotyrosine).

Belongs to the peptidase M1 family. Homodimer. Interacts with SLC6A19. As to quaternary structure, (Microbial infection) Interacts with the S1 domain of human coronavirus 229E/HCoV-229E spike protein. Zn(2+) is required as a cofactor. Post-translationally, sulfated. In terms of processing, N- and O-glycosylated. May undergo proteolysis and give rise to a soluble form. Expressed in epithelial cells of the kidney, intestine, and respiratory tract; granulocytes, monocytes, fibroblasts, endothelial cells, cerebral pericytes at the blood-brain barrier, synaptic membranes of cells in the CNS. Also expressed in endometrial stromal cells, but not in the endometrial glandular cells. Found in the vasculature of tissues that undergo angiogenesis and in malignant gliomas and lymph node metastases from multiple tumor types but not in blood vessels of normal tissues. A soluble form has been found in plasma. It is found to be elevated in plasma and effusions of cancer patients.

It is found in the cell membrane. The enzyme catalyses Release of an N-terminal amino acid, Xaa-|-Yaa- from a peptide, amide or arylamide. Xaa is preferably Ala, but may be most amino acids including Pro (slow action). When a terminal hydrophobic residue is followed by a prolyl residue, the two may be released as an intact Xaa-Pro dipeptide.. In terms of biological role, broad specificity aminopeptidase which plays a role in the final digestion of peptides generated from hydrolysis of proteins by gastric and pancreatic proteases. Also involved in the processing of various peptides including peptide hormones, such as angiotensin III and IV, neuropeptides, and chemokines. May also be involved the cleavage of peptides bound to major histocompatibility complex class II molecules of antigen presenting cells. May have a role in angiogenesis and promote cholesterol crystallization. May have a role in amino acid transport by acting as binding partner of amino acid transporter SLC6A19 and regulating its activity. (Microbial infection) Acts as a receptor for human coronavirus 229E/HCoV-229E. In case of human coronavirus 229E (HCoV-229E) infection, serves as receptor for HCoV-229E spike glycoprotein. Its function is as follows. (Microbial infection) Mediates as well Human cytomegalovirus (HCMV) infection. In Homo sapiens (Human), this protein is Aminopeptidase N (ANPEP).